Consider the following 159-residue polypeptide: Betainyl-CoA thioesterase (159 aa).

This sequence belongs to the betainyl-CoA thioesterase family.

It carries out the reaction N,N,N-trimethylglycyl-CoA + H2O = glycine betaine + CoA + H(+). The protein operates within amine and polyamine metabolism; carnitine metabolism. Functionally, catalyzes the cleavage of betainyl-CoA (N,N,N-trimethylglycyl-CoA) into glycine betaine and coenzyme A. Is involved in a L-carnitine degradation pathway that allows P.aeruginosa to grow on L-carnitine as the sole source of carbon and nitrogen. The chain is Betainyl-CoA thioesterase from Pseudomonas aeruginosa (strain ATCC 15692 / DSM 22644 / CIP 104116 / JCM 14847 / LMG 12228 / 1C / PRS 101 / PAO1).